We begin with the raw amino-acid sequence, 134 residues long: UPF0102 protein Dvul_2148 (134 aa).

It belongs to the UPF0102 family.

The sequence is that of UPF0102 protein Dvul_2148 from Nitratidesulfovibrio vulgaris (strain DP4) (Desulfovibrio vulgaris).